The following is a 116-amino-acid chain: Protein Wnt-5a (116 aa).

Residue Ser1 is the site of O-palmitoleoyl serine; by PORCN attachment. N-linked (GlcNAc...) asparagine glycosylation is found at Asn69 and Asn83. A disulfide bridge connects residues Cys82 and Cys97.

This sequence belongs to the Wnt family. In terms of processing, palmitoleoylation is required for efficient binding to frizzled receptors. Depalmitoleoylation leads to Wnt signaling pathway inhibition.

It is found in the secreted. The protein localises to the extracellular space. The protein resides in the extracellular matrix. Functionally, ligand for members of the frizzled family of seven transmembrane receptors. Can activate or inhibit canonical Wnt signaling, depending on receptor context. Required during embryogenesis for extension of the primary anterior-posterior axis. The chain is Protein Wnt-5a (WNT-5A) from Alopias vulpinus (Common thresher shark).